The following is a 1150-amino-acid chain: PAN2-PAN3 deadenylation complex catalytic subunit pan2 (1150 aa).

WD repeat units lie at residues 96-139 and 270-309; these read AHEE…DKLH and ANVS…HFNE. A linker region spans residues 310–446; that stretch reads MSKEAEFGDV…GAKINGETDD (137 aa). In terms of domain architecture, USP spans 447–816; the sequence is DPLLKYSNVE…IPCVLAYQVQ (370 aa). Residues 865 to 1043 form the Exonuclease domain; the sequence is VALDTEFVDL…IEDARMALRL (179 aa). The a divalent metal cation site is built by aspartate 868, glutamate 870, aspartate 977, and aspartate 1036. The interval 1074-1150 is disordered; sequence PPPRNGVPTV…GDFFSGSPLK (77 aa). Residues 1091–1106 show a composition bias toward polar residues; the sequence is VTMQNNSGRNTPSTSD. The span at 1108 to 1120 shows a compositional bias: low complexity; that stretch reads AGAAASAPATPRQ.

This sequence belongs to the peptidase C19 family. PAN2 subfamily. Forms a heterotrimer with an asymmetric homodimer of the regulatory subunit pan3 to form the poly(A)-nuclease (PAN) deadenylation complex. Requires a divalent metal cation as cofactor.

It is found in the cytoplasm. The catalysed reaction is Exonucleolytic cleavage of poly(A) to 5'-AMP.. With respect to regulation, positively regulated by the regulatory subunit pan3. Its function is as follows. Catalytic subunit of the poly(A)-nuclease (PAN) deadenylation complex, one of two cytoplasmic mRNA deadenylases involved in mRNA turnover. PAN specifically shortens poly(A) tails of RNA and the activity is stimulated by poly(A)-binding protein pab1. PAN deadenylation is followed by rapid degradation of the shortened mRNA tails by the CCR4-NOT complex. Deadenylated mRNAs are then degraded by two alternative mechanisms, namely exosome-mediated 3'-5' exonucleolytic degradation, or deadenylation-dependent mRNA decaping and subsequent 5'-3' exonucleolytic degradation by xrn1. May also be involved in post-transcriptional maturation of mRNA poly(A) tails. This chain is PAN2-PAN3 deadenylation complex catalytic subunit pan2, found in Aspergillus niger (strain ATCC MYA-4892 / CBS 513.88 / FGSC A1513).